Reading from the N-terminus, the 154-residue chain is Myoglobin (154 aa).

Positions 2 to 148 (GLSDGEWQLV…FRNDMAAQYK (147 aa)) constitute a Globin domain. A Phosphoserine modification is found at Ser4. Residue His65 coordinates nitrite. Position 65 (His65) interacts with O2. Thr68 is subject to Phosphothreonine. Residue His94 participates in heme b binding.

This sequence belongs to the globin family. In terms of assembly, monomeric.

It is found in the cytoplasm. The protein localises to the sarcoplasm. The enzyme catalyses Fe(III)-heme b-[protein] + nitric oxide + H2O = Fe(II)-heme b-[protein] + nitrite + 2 H(+). It carries out the reaction H2O2 + AH2 = A + 2 H2O. Functionally, monomeric heme protein which primary function is to store oxygen and facilitate its diffusion within muscle tissues. Reversibly binds oxygen through a pentacoordinated heme iron and enables its timely and efficient release as needed during periods of heightened demand. Depending on the oxidative conditions of tissues and cells, and in addition to its ability to bind oxygen, it also has a nitrite reductase activity whereby it regulates the production of bioactive nitric oxide. Under stress conditions, like hypoxia and anoxia, it also protects cells against reactive oxygen species thanks to its pseudoperoxidase activity. In Cervus elaphus (Red deer), this protein is Myoglobin (MB).